The sequence spans 574 residues: MSSGIILLIVAIVLLVIIAYLVGVIIRKRNDSLITSLEERKQALFALPVNDEIEEVKSLHLIGQSQTSFREWNQKWVDLTVNSFADIENHIFEAENLNDTFNFIRAKHEINSVESQLNLVEEDIASIREALNILKEQEEKNSARVTHALDLYEKLQASISENEDNFGSTMPEIDKQMKNIETEFSQFVALNSSGDPVEASEVLDRAEEHTIALGQITEQIPAIVAKLEDDFPDQLDDLETGYRRLLEENYHFPEKNIEARFQEIRESIRANSSELVTLDLDRAREENTHIQERIDSLYEVFEREIAAYKVAAKNSKMLPRYLAHVKRNNEQLKDEIARLSRKYILSETESLTVKAFEKDIKEIEDSTLAVAEQFGLQEKPFSELQVTFERSIKTLTNVESGQMDVFAAVKDIEKIESQARHNLDVYVTQLHMIKRYMEKRHLPGIPQDFLSAFFTTSSQLEALMDELSRGRINIEAVSRLSEVATVAIANLEDLTYQVVQNATLTEQLLQYSNRYRSFEAGVQSSFEHALRLFEVENDYQASFDEISYALETVEPGVTDRFVNSYEKTREHIRF.

Residues 1-7 (MSSGIIL) lie on the Extracellular side of the membrane. A helical transmembrane segment spans residues 8–26 (LIVAIVLLVIIAYLVGVII). Residues 27–574 (RKRNDSLITS…YEKTREHIRF (548 aa)) are Cytoplasmic-facing. 3 coiled-coil regions span residues 102 to 141 (NFIRAKHEINSVESQLNLVEEDIASIREALNILKEQEEKN), 274 to 350 (ELVT…ETES), and 459 to 520 (QLEA…SFEA).

This sequence belongs to the EzrA family.

Its subcellular location is the cell membrane. Its function is as follows. Negative regulator of FtsZ ring formation; modulates the frequency and position of FtsZ ring formation. Inhibits FtsZ ring formation at polar sites. Interacts either with FtsZ or with one of its binding partners to promote depolymerization. The chain is Septation ring formation regulator EzrA from Streptococcus pyogenes serotype M3 (strain SSI-1).